A 177-amino-acid chain; its full sequence is Adenine phosphoribosyltransferase (177 aa).

It belongs to the purine/pyrimidine phosphoribosyltransferase family. As to quaternary structure, homodimer.

It is found in the cytoplasm. It catalyses the reaction AMP + diphosphate = 5-phospho-alpha-D-ribose 1-diphosphate + adenine. It functions in the pathway purine metabolism; AMP biosynthesis via salvage pathway; AMP from adenine: step 1/1. Catalyzes a salvage reaction resulting in the formation of AMP, that is energically less costly than de novo synthesis. This chain is Adenine phosphoribosyltransferase, found in Chlorobaculum parvum (strain DSM 263 / NCIMB 8327) (Chlorobium vibrioforme subsp. thiosulfatophilum).